A 68-amino-acid polypeptide reads, in one-letter code: Beta-toxin Im-2 (68 aa).

An LCN-type CS-alpha/beta domain is found at 1–67 (KDGYPMVRAG…VWTYEKNTCK (67 aa)). Intrachain disulfides connect cysteine 15–cysteine 66, cysteine 19–cysteine 40, cysteine 26–cysteine 47, and cysteine 30–cysteine 49.

It belongs to the long (4 C-C) scorpion toxin superfamily. Sodium channel inhibitor family. Beta subfamily. As to expression, expressed by the venom gland.

Its subcellular location is the secreted. Beta toxins bind voltage-independently at site-4 of sodium channels (Nav) and shift the voltage of activation toward more negative potentials thereby affecting sodium channel activation and promoting spontaneous and repetitive firing. Is toxic to both insect and mammals. Induces paralysis in Acheta domestica crickets, but does not induce death, whereas intracerebroventricular injection into mice causes immediate death (at a dose of 0.05 ug/g). The chain is Beta-toxin Im-2 from Isometrus maculatus (Lesser brown scorpion).